We begin with the raw amino-acid sequence, 163 residues long: NADH-quinone oxidoreductase subunit I (163 aa).

4Fe-4S ferredoxin-type domains follow at residues 53–83 (LRRY…IEAG) and 94–123 (TRYD…EGPN). C63, C66, C69, C73, C103, C106, C109, and C113 together coordinate [4Fe-4S] cluster.

It belongs to the complex I 23 kDa subunit family. In terms of assembly, NDH-1 is composed of 14 different subunits. Subunits NuoA, H, J, K, L, M, N constitute the membrane sector of the complex. Requires [4Fe-4S] cluster as cofactor.

The protein localises to the cell inner membrane. The enzyme catalyses a quinone + NADH + 5 H(+)(in) = a quinol + NAD(+) + 4 H(+)(out). Functionally, NDH-1 shuttles electrons from NADH, via FMN and iron-sulfur (Fe-S) centers, to quinones in the respiratory chain. The immediate electron acceptor for the enzyme in this species is believed to be ubiquinone. Couples the redox reaction to proton translocation (for every two electrons transferred, four hydrogen ions are translocated across the cytoplasmic membrane), and thus conserves the redox energy in a proton gradient. In Parvibaculum lavamentivorans (strain DS-1 / DSM 13023 / NCIMB 13966), this protein is NADH-quinone oxidoreductase subunit I.